The primary structure comprises 102 residues: ATP-dependent Clp protease adapter protein ClpS (102 aa).

The protein belongs to the ClpS family. As to quaternary structure, binds to the N-terminal domain of the chaperone ClpA.

Its function is as follows. Involved in the modulation of the specificity of the ClpAP-mediated ATP-dependent protein degradation. The sequence is that of ATP-dependent Clp protease adapter protein ClpS from Janthinobacterium sp. (strain Marseille) (Minibacterium massiliensis).